The sequence spans 193 residues: Protein hunchback (193 aa).

2 disordered regions span residues 16–126 (SHHH…ATTT) and 146–193 (SNDK…KYMA). Residues 17-31 (HHHHHHHAHHSHHQH) are compositionally biased toward basic residues. Low complexity-rich tracts occupy residues 35–46 (SNSNSNASSPHQ) and 56–77 (SSNN…QQQQ). Positions 89–99 (PSPSNNDQNSR) are enriched in polar residues. Over residues 174-193 (EPEKEHDLMSNSSEDMKYMA) the composition is skewed to basic and acidic residues.

It belongs to the hunchback C2H2-type zinc-finger protein family.

Its subcellular location is the nucleus. Gap class segmentation protein that controls development of head structures. The sequence is that of Protein hunchback (hb) from Drosophila iki (Fruit fly).